We begin with the raw amino-acid sequence, 204 residues long: Heart- and neural crest derivatives-expressed protein 1 (204 aa).

Disordered stretches follow at residues 1–24, 57–115, and 172–204; these read MNLVGSYAHHHHHHHHHHHPHPAH, APDF…RTES, and LKKADGGRESKRKRELQQHEGFPPALGPGEKRD. Composition is skewed to basic residues over residues 8–22 and 98–110; these read AHHHHHHHHHHHPHP and LGRRKGSGPKKER. In terms of domain architecture, bHLH spans 100 to 152; the sequence is RRKGSGPKKERRRTESINSAFAELRECIPNVPADTKLSKIKTLRLATSYIAYL. At T113 the chain carries Phosphothreonine; by PLK4. S115 bears the Phosphoserine; by PLK4 mark.

Efficient DNA binding requires dimerization with another bHLH protein. Forms homodimers and heterodimers with TCF3 gene products E12 and E47, HAND2 and HEY1, HEY2 and HEYL (hairy-related transcription factors). Interacts with MDFIC. Interacts with SOX15; the interaction enhances HAND1-induced differentiation of trophoblast giant cells. In terms of processing, phosphorylation by PLK4 disrupts the interaction with MDFIC and leads to translocation into the nucleoplasm, allowing dimerization and transcription factor activity.

It localises to the nucleus. The protein localises to the nucleoplasm. Its subcellular location is the nucleolus. Its function is as follows. Transcription factor that plays an essential role in both trophoblast giant cell differentiation and in cardiac morphogenesis. Binds the DNA sequence 5'-NRTCTG-3' (non-canonical E-box). Acts as a transcriptional repressor of SOX15. In the adult, could be required for ongoing expression of cardiac-specific genes. The protein is Heart- and neural crest derivatives-expressed protein 1 (HAND1) of Ovis aries (Sheep).